The primary structure comprises 207 residues: Succinyl-CoA:3-ketoacid coenzyme A transferase subunit B (207 aa).

Residue E43 is part of the active site.

It belongs to the 3-oxoacid CoA-transferase subunit B family. In terms of assembly, heterodimer of a subunit A and a subunit B.

The enzyme catalyses a 3-oxo acid + succinyl-CoA = a 3-oxoacyl-CoA + succinate. In Helicobacter pylori (strain J99 / ATCC 700824) (Campylobacter pylori J99), this protein is Succinyl-CoA:3-ketoacid coenzyme A transferase subunit B (scoB).